Reading from the N-terminus, the 484-residue chain is Chromosomal replication initiator protein DnaA (484 aa).

Residues 1-73 (MQEGKNIWSL…EILIEKGHST (73 aa)) are domain I, interacts with DnaA modulators. Residues 73 to 140 (TINVEFIHSQ…EEIHIKYRNP (68 aa)) are domain II. Positions 141–357 (FLKKKYTFEN…AAVTKLKAHI (217 aa)) are domain III, AAA+ region. Residues Gly-185, Gly-187, Lys-188, and Thr-189 each contribute to the ATP site. Positions 358–484 (DLEDIEIDTN…IELMNKINKN (127 aa)) are domain IV, binds dsDNA.

The protein belongs to the DnaA family. In terms of assembly, oligomerizes as a right-handed, spiral filament on DNA at oriC.

It localises to the cytoplasm. Plays an essential role in the initiation and regulation of chromosomal replication. ATP-DnaA binds to the origin of replication (oriC) to initiate formation of the DNA replication initiation complex once per cell cycle. Binds the DnaA box (a 9 base pair repeat at the origin) and separates the double-stranded (ds)DNA. Forms a right-handed helical filament on oriC DNA; dsDNA binds to the exterior of the filament while single-stranded (ss)DNA is stabiized in the filament's interior. The ATP-DnaA-oriC complex binds and stabilizes one strand of the AT-rich DNA unwinding element (DUE), permitting loading of DNA polymerase. After initiation quickly degrades to an ADP-DnaA complex that is not apt for DNA replication. Binds acidic phospholipids. This chain is Chromosomal replication initiator protein DnaA, found in Borrelia duttonii (strain Ly).